Reading from the N-terminus, the 99-residue chain is Large ribosomal subunit protein uL23 (99 aa).

The protein belongs to the universal ribosomal protein uL23 family. In terms of assembly, part of the 50S ribosomal subunit. Contacts protein L29, and trigger factor when it is bound to the ribosome.

Its function is as follows. One of the early assembly proteins it binds 23S rRNA. One of the proteins that surrounds the polypeptide exit tunnel on the outside of the ribosome. Forms the main docking site for trigger factor binding to the ribosome. This Francisella tularensis subsp. holarctica (strain OSU18) protein is Large ribosomal subunit protein uL23.